The following is a 215-amino-acid chain: Redox-sensing transcriptional repressor Rex (215 aa).

A DNA-binding region (H-T-H motif) is located at residues 18–57; sequence LYYRFLKNLHASGKQRVSSAELSDAVKVDSATIRRDFSYF. An NAD(+)-binding site is contributed by 92–97; sequence GVGNLG.

It belongs to the transcriptional regulatory Rex family. Homodimer.

The protein localises to the cytoplasm. Its function is as follows. Modulates transcription in response to changes in cellular NADH/NAD(+) redox state. The polypeptide is Redox-sensing transcriptional repressor Rex (Bacillus subtilis (strain 168)).